A 496-amino-acid chain; its full sequence is Cobyric acid synthase (496 aa).

The GATase cobBQ-type domain occupies 257–447 (KINVAIILLK…MHGILDNPAV (191 aa)). Cysteine 338 serves as the catalytic Nucleophile. Residue histidine 439 is part of the active site.

It belongs to the CobB/CobQ family. CobQ subfamily.

The protein operates within cofactor biosynthesis; adenosylcobalamin biosynthesis. Catalyzes amidations at positions B, D, E, and G on adenosylcobyrinic A,C-diamide. NH(2) groups are provided by glutamine, and one molecule of ATP is hydrogenolyzed for each amidation. This is Cobyric acid synthase from Parabacteroides distasonis (strain ATCC 8503 / DSM 20701 / CIP 104284 / JCM 5825 / NCTC 11152).